Consider the following 87-residue polypeptide: Large ribosomal subunit protein bL27 (87 aa).

This sequence belongs to the bacterial ribosomal protein bL27 family.

The sequence is that of Large ribosomal subunit protein bL27 from Stenotrophomonas maltophilia (strain K279a).